The following is a 243-amino-acid chain: Ribosomal RNA small subunit methyltransferase G (243 aa).

Residues Gly-97, Leu-102, 148–149 (VE), and Arg-161 each bind S-adenosyl-L-methionine.

This sequence belongs to the methyltransferase superfamily. RNA methyltransferase RsmG family.

The protein resides in the cytoplasm. It catalyses the reaction guanosine(527) in 16S rRNA + S-adenosyl-L-methionine = N(7)-methylguanosine(527) in 16S rRNA + S-adenosyl-L-homocysteine. In terms of biological role, specifically methylates the N7 position of guanine in position 527 of 16S rRNA. The chain is Ribosomal RNA small subunit methyltransferase G from Paracidovorax citrulli (strain AAC00-1) (Acidovorax citrulli).